A 184-amino-acid chain; its full sequence is MREYKIVVLGSGGVGKSALTVQFVQCIFVEKYDPTIEDSYRKQVEVDGQQCMLEILDTAGTEQFTAMRDLYMKNGQGFVLVYSITAQSTFNDLQDLREQILRVKDTDDVPMVLVGNKCDLEEERVVGKELGKNLATQFNCAFMETSAKAKVNVNDIFYDLVRQINKKSPEKKQKKPKKSLCVLL.

Residue 10 to 17 (GSGGVGKS) participates in GTP binding. An Effector region motif is present at residues 32–40 (YDPTIEDSY). Residues 57 to 61 (DTAGT) and 116 to 119 (NKCD) contribute to the GTP site. Cysteine 181 carries the post-translational modification Cysteine methyl ester. Cysteine 181 carries S-geranylgeranyl cysteine lipidation. The propeptide at 182 to 184 (VLL) is removed in mature form.

Belongs to the small GTPase superfamily. Ras family.

The protein resides in the cell membrane. It carries out the reaction GTP + H2O = GDP + phosphate + H(+). Alternates between an inactive form bound to GDP and an active form bound to GTP. Activated by a guanine nucleotide-exchange factor (GEF) and inactivated by a GTPase-activating protein (GAP). In terms of biological role, ras proteins bind GDP/GTP and possess intrinsic GTPase activity. Plays a role in photoreceptor cell determination. The polypeptide is Ras-related protein Rap1 (Drosophila melanogaster (Fruit fly)).